A 319-amino-acid polypeptide reads, in one-letter code: MFQQMQKISLKLLKTTFLFLFATFILVGLPSTSQAYPIFAQQAYENPREATGRIVCANCHLAKKSVDIEVPQAVLPNTVFEAVVKIPYDIQLKQVLANGKKGGLNVGAVLILPEGFQIAPADRIPEEMKSKIGNLYYQPYSAEKKNIVVVGPIPGKTYQEIVFPILSPDPAKDKGTHFFKYPIYVGGNRGRGQIYPDGSKSNNNVYNASTTGKIIQITAKPKGGYILNIETPDGATIEEKIPAGPELIVSEGQSVKADQPLTKNPNVGGFGQTEGEIVLQNPARIQGLIAFFISVIIAQTFLVLKKKQFERVQLAEMNF.

The signal sequence occupies residues 1-35; the sequence is MFQQMQKISLKLLKTTFLFLFATFILVGLPSTSQA. Heme contacts are provided by Y36, C56, C59, and H60. The helical transmembrane segment at 285-305 threads the bilayer; that stretch reads IQGLIAFFISVIIAQTFLVLK.

It belongs to the cytochrome f family. In terms of assembly, the 4 large subunits of the cytochrome b6-f complex are cytochrome b6, subunit IV (17 kDa polypeptide, petD), cytochrome f and the Rieske protein, while the 4 small subunits are PetG, PetL, PetM and PetN. The complex functions as a dimer. Requires heme as cofactor.

The protein localises to the plastid. It localises to the chloroplast thylakoid membrane. Component of the cytochrome b6-f complex, which mediates electron transfer between photosystem II (PSII) and photosystem I (PSI), cyclic electron flow around PSI, and state transitions. The chain is Cytochrome f from Chlorokybus atmophyticus (Soil alga).